We begin with the raw amino-acid sequence, 674 residues long: uncharacterized protein (674 aa).

The first 24 residues, 1–24 (MKTLKALKIFIIVYISSVSLESFA), serve as a signal peptide directing secretion. Helical transmembrane passes span 226 to 246 (IIGA…ALNK) and 254 to 274 (ITLF…LEPL). Residues 363–384 (GNGPGGNNKPIPNFDPDSKKDR) are disordered. Helical transmembrane passes span 409 to 429 (IIIL…LLYF), 436 to 456 (CMIT…MVLF), 469 to 489 (VCIS…LLIT), and 562 to 582 (VVSI…FYYF). Residues 624–674 (SSVHAQGKSPVEDKPDIGSKRKDGVQQGEDSENSSGGELADLASGSGGGKL) form a disordered region. Residues 633 to 647 (PVEDKPDIGSKRKDG) show a composition bias toward basic and acidic residues.

Belongs to the TrbL/VirB6 family.

Its subcellular location is the cell membrane. This is an uncharacterized protein from Rickettsia typhi (strain ATCC VR-144 / Wilmington).